Here is a 401-residue protein sequence, read N- to C-terminus: Nodal homolog 3-C (401 aa).

An N-terminal signal peptide occupies residues methionine 1 to alanine 18. Positions methionine 19–arginine 274 are excised as a propeptide. N-linked (GlcNAc...) asparagine glycosylation is found at asparagine 168, asparagine 337, and asparagine 344. Disulfide bonds link cysteine 299/cysteine 365 and cysteine 328/cysteine 396.

It belongs to the TGF-beta family. In terms of assembly, monomer. The propeptide region interacts with bmp4 in a non-covalent manner. As to expression, expressed in the dorsal marginal region of late blastula, becoming restricted to the Spemann organizer at the early gastrula stage.

The protein localises to the secreted. In terms of biological role, exhibits mesoderm-dorsalizing activity and neural-inducing activity, but lacks mesoderm-inducing activity. Regulates the expression of specific mesodermal and neural genes. Induces convergent extension movements at the embryonic midline by activating the fgf signaling pathway to induce t/bra expression in the organizer region. Acts with wnt11 to induce Spemann organizer cells and induce axis formation. The unprocessed protein antagonizes bmp-signaling. This is Nodal homolog 3-C from Xenopus tropicalis (Western clawed frog).